A 446-amino-acid chain; its full sequence is MENISDLWNSALKELEKKVSKPSYETWLKSTTAHNLKKDVLTITAPNEFARDWLESHYSELISETLYDLTGAKLAIRFIIPQSQAEEDIDLPPVKRNPAQDDSAHLPQSMLNPKYTFDTFVIGSGNRFAHAASLAVAEAPAKAYNPLFIYGGVGLGKTHLMHAIGHYVIEHNPNAKVVYLSSEKFTNEFINSIRDNKAVDFRNKYRNVDVLLIDDIQFLAGKEQTQEEFFHTFNALHEESKQIVISSDRPPKEIPTLEDRLRSRFEWGLITDITPPDLETRIAILRKKAKAEGLDIPNEVMLYIANQIDSNIRELEGALIRVVAYSSLINKDINADLAAEALKDIIPNSKPKIISIYDIQKAVGDVYQVKLEDFKAKKRTKSVAFPRQIAMYLSRELTDSSLPKIGEEFGGRDHTTVIHAHEKISKLLKTDTQLQKQVEEINGILK.

Residues 1–81 (MENISDLWNS…AKLAIRFIIP (81 aa)) form a domain I, interacts with DnaA modulators region. Positions 81 to 109 (PQSQAEEDIDLPPVKRNPAQDDSAHLPQS) are domain II. The segment at 110-326 (MLNPKYTFDT…GALIRVVAYS (217 aa)) is domain III, AAA+ region. 4 residues coordinate ATP: Gly154, Gly156, Lys157, and Thr158. Residues 327-446 (SLINKDINAD…QVEEINGILK (120 aa)) are domain IV, binds dsDNA.

This sequence belongs to the DnaA family. As to quaternary structure, oligomerizes as a right-handed, spiral filament on DNA at oriC.

The protein localises to the cytoplasm. Plays an essential role in the initiation and regulation of chromosomal replication. ATP-DnaA binds to the origin of replication (oriC) to initiate formation of the DNA replication initiation complex once per cell cycle. Binds the DnaA box (a 9 base pair repeat at the origin) and separates the double-stranded (ds)DNA. Forms a right-handed helical filament on oriC DNA; dsDNA binds to the exterior of the filament while single-stranded (ss)DNA is stabiized in the filament's interior. The ATP-DnaA-oriC complex binds and stabilizes one strand of the AT-rich DNA unwinding element (DUE), permitting loading of DNA polymerase. After initiation quickly degrades to an ADP-DnaA complex that is not apt for DNA replication. Binds acidic phospholipids. This Bacillus cereus (strain G9842) protein is Chromosomal replication initiator protein DnaA.